A 427-amino-acid chain; its full sequence is Flotillin-1 (427 aa).

Phosphoserine occurs at positions 19, 163, and 385.

It belongs to the band 7/mec-2 family. Flotillin subfamily. Heterooligomeric complex of flotillin-1 and flotillin-2 and caveolin-1 and caveolin-2. Interacts with ECPAS.

The protein resides in the cell membrane. It is found in the endosome. The protein localises to the membrane. It localises to the caveola. Its subcellular location is the melanosome. The protein resides in the membrane raft. Functionally, may act as a scaffolding protein within caveolar membranes, functionally participating in formation of caveolae or caveolae-like vesicles. This chain is Flotillin-1 (FLOT1), found in Bos taurus (Bovine).